Reading from the N-terminus, the 676-residue chain is Electrogenic aspartate/glutamate antiporter SLC25A12, mitochondrial (676 aa).

The residue at position 2 (alanine 2) is an N-acetylalanine. The interval 2 to 293 (AVKVHTTKRG…TLADIERIAP (292 aa)) is regulatory N-terminal domain. The Mitochondrial intermembrane segment spans residues 2–328 (AVKVHTTKRG…WLQIAESAYR (327 aa)). Ca(2+) contacts are provided by aspartate 65, threonine 67, aspartate 69, leucine 71, and glutamate 76. 4 consecutive EF-hand domains span residues 65–76 (DQTKDGLISYQE), 86–121 (APDS…TIIH), 125–155 (PFNW…QFLQ), and 157–192 (LQLE…IRSH). Residues 294 to 309 (LAEGALPYNLAELQRQ) are linker loop domain. The segment at 319 to 611 (WLQIAESAYR…RWFYIDFGGL (293 aa)) is carrier domain. Solcar repeat units lie at residues 323–415 (AESA…VRDK), 423–507 (IPLP…CKLL), and 515–603 (VGGI…LQRW). The chain crosses the membrane as a helical span at residues 329–346 (FTLGSVAGAVGATAVYPI). Topologically, residues 347–389 (DLVKTRMQNQRGTGSVVGELMYKNSFDCFKKVLRYEGFFGLYR) are mitochondrial matrix. The chain crosses the membrane as a helical span at residues 390 to 409 (GLIPQLIGVAPEKAIKLTVN). Residues 410–432 (DFVRDKFTRRDGSIPLPAEILAG) lie on the Mitochondrial intermembrane side of the membrane. Residues 433–446 (GCAGGSQVIFTNPL) traverse the membrane as a helical segment. Residues 447–481 (EIVKIRLQVAGEITTGPRVSALNVLQDLGLFGLYK) are Mitochondrial matrix-facing. Residues 482–501 (GAKACFLRDIPFSAIYFPVY) traverse the membrane as a helical segment. Residues 502–520 (AHCKLLLADENGHVGGINL) are Mitochondrial intermembrane-facing. Residues 521–538 (LTAGAMAGVPAASLVTPA) traverse the membrane as a helical segment. The Mitochondrial matrix segment spans residues 539-577 (DVIKTRLQVAARAGQTTYSGVIDCFRKILREEGPSAFWK). Residues 578–597 (GTAARVFRSSPQFGVTLVTY) traverse the membrane as a helical segment. Topologically, residues 598–676 (ELLQRWFYID…AQPKVAAAAQ (79 aa)) are mitochondrial intermembrane. The C-terminal domain stretch occupies residues 612–674 (KPSGSEPTPK…AAAQPKVAAA (63 aa)).

The protein belongs to the mitochondrial carrier (TC 2.A.29) family. As to quaternary structure, homodimer (via N-terminus).

It is found in the mitochondrion inner membrane. The enzyme catalyses L-aspartate(in) + L-glutamate(out) + H(+)(out) = L-aspartate(out) + L-glutamate(in) + H(+)(in). It catalyses the reaction 3-sulfino-L-alanine(out) + L-glutamate(in) + H(+)(in) = 3-sulfino-L-alanine(in) + L-glutamate(out) + H(+)(out). It carries out the reaction 3-sulfino-L-alanine(out) + L-aspartate(in) = 3-sulfino-L-alanine(in) + L-aspartate(out). With respect to regulation, L-aspartate and 3-sulfino-L-alanine uptake are both inhibited by glisoxepide. Mitochondrial electrogenic aspartate/glutamate antiporter that favors efflux of aspartate and entry of glutamate and proton within the mitochondria as part of the malate-aspartate shuttle. Also mediates the uptake of L-cysteinesulfinate (3-sulfino-L-alanine) by mitochondria in exchange of L-glutamate and proton. Can also exchange L-cysteinesulfinate with aspartate in their anionic form without any proton translocation. Lacks transport activity towards L-glutamine or gamma-aminobutyric acid (GABA). The protein is Electrogenic aspartate/glutamate antiporter SLC25A12, mitochondrial of Rattus norvegicus (Rat).